A 202-amino-acid polypeptide reads, in one-letter code: Holliday junction branch migration complex subunit RuvA (202 aa).

The domain I stretch occupies residues M1 to T62. Positions R63 to T141 are domain II. A flexible linker region spans residues T141–P145. The domain III stretch occupies residues A146 to D202.

The protein belongs to the RuvA family. As to quaternary structure, homotetramer. Forms an RuvA(8)-RuvB(12)-Holliday junction (HJ) complex. HJ DNA is sandwiched between 2 RuvA tetramers; dsDNA enters through RuvA and exits via RuvB. An RuvB hexamer assembles on each DNA strand where it exits the tetramer. Each RuvB hexamer is contacted by two RuvA subunits (via domain III) on 2 adjacent RuvB subunits; this complex drives branch migration. In the full resolvosome a probable DNA-RuvA(4)-RuvB(12)-RuvC(2) complex forms which resolves the HJ.

It is found in the cytoplasm. The RuvA-RuvB-RuvC complex processes Holliday junction (HJ) DNA during genetic recombination and DNA repair, while the RuvA-RuvB complex plays an important role in the rescue of blocked DNA replication forks via replication fork reversal (RFR). RuvA specifically binds to HJ cruciform DNA, conferring on it an open structure. The RuvB hexamer acts as an ATP-dependent pump, pulling dsDNA into and through the RuvAB complex. HJ branch migration allows RuvC to scan DNA until it finds its consensus sequence, where it cleaves and resolves the cruciform DNA. The sequence is that of Holliday junction branch migration complex subunit RuvA from Moorella thermoacetica (strain ATCC 39073 / JCM 9320).